The chain runs to 192 residues: Peptidyl-tRNA hydrolase (192 aa).

TRNA is bound at residue Tyr18. Residue His23 is the Proton acceptor of the active site. Phe69, Asn71, and Asn117 together coordinate tRNA.

The protein belongs to the PTH family. As to quaternary structure, monomer.

It is found in the cytoplasm. It catalyses the reaction an N-acyl-L-alpha-aminoacyl-tRNA + H2O = an N-acyl-L-amino acid + a tRNA + H(+). In terms of biological role, hydrolyzes ribosome-free peptidyl-tRNAs (with 1 or more amino acids incorporated), which drop off the ribosome during protein synthesis, or as a result of ribosome stalling. Its function is as follows. Catalyzes the release of premature peptidyl moieties from peptidyl-tRNA molecules trapped in stalled 50S ribosomal subunits, and thus maintains levels of free tRNAs and 50S ribosomes. In Neisseria meningitidis serogroup C (strain 053442), this protein is Peptidyl-tRNA hydrolase.